A 383-amino-acid polypeptide reads, in one-letter code: MRALHVPAGSATALLLPALQRVLGGSDPALVAVPTQHESLLGALRVGEQIDDDVALVVTTSGTTGPPKGAMLTAAALTASASAAHDRLGGPGSWLLAVPPYHIAGLAVLVRSVIAGSVPVELNVSAGFDVTELPNAIKRLGSGRRYTSLVAAQLAKALTDPAATAALAELDAVLIGGGPAPRPILDAAAAAGITVVRTYGMSETSGGCVYDGVPLDGVRLRVLAGGRIAIGGATLAKGYRNPVSPDPFAEPGWFHTDDLGALESGDSGVLTVLGRADEAISTGGFTVLPQPVEAALGTHPAVRDCAVFGLADDRLGQRVVAAIVVGDGCPPPTLEALRAHVARTLDVTAAPRELHVVNVLPRRGIGKVDRAALVRRFAGEADQ.

The protein belongs to the ATP-dependent AMP-binding enzyme family. MenE subfamily.

It carries out the reaction 2-succinylbenzoate + ATP + CoA = 2-succinylbenzoyl-CoA + AMP + diphosphate. It participates in quinol/quinone metabolism; 1,4-dihydroxy-2-naphthoate biosynthesis; 1,4-dihydroxy-2-naphthoate from chorismate: step 5/7. The protein operates within quinol/quinone metabolism; menaquinone biosynthesis. In terms of biological role, converts 2-succinylbenzoate (OSB) to 2-succinylbenzoyl-CoA (OSB-CoA). May be involved in the biosynthesis of menaquinone. The sequence is that of Probable 2-succinylbenzoate--CoA ligase (menE) from Mycobacterium tuberculosis (strain CDC 1551 / Oshkosh).